A 571-amino-acid polypeptide reads, in one-letter code: Hemagglutinin-neuraminidase (571 aa).

Over methionine 1–arginine 26 the chain is Intravirion. The chain crosses the membrane as a helical span at residues isoleucine 27–serine 47. Over methionine 48–valine 571 the chain is Virion surface. Asparagine 119 carries N-linked (GlcNAc...) asparagine; by host glycosylation. Residues glycine 124–tyrosine 152 are important for interaction with fusion/F protein. Disulfide bonds link cysteine 172–cysteine 196, cysteine 186–cysteine 247, and cysteine 238–cysteine 251. The segment at asparagine 234 to serine 239 is involved in neuraminidase activity. N-linked (GlcNAc...) asparagine; by host glycans are attached at residues asparagine 341 and asparagine 433. Disulfide bonds link cysteine 344-cysteine 461 and cysteine 455-cysteine 465. N-linked (GlcNAc...) asparagine; by host glycans are attached at residues asparagine 481, asparagine 508, and asparagine 538. A disulfide bridge links cysteine 531 with cysteine 542.

It belongs to the paramyxoviruses hemagglutinin-neuraminidase family. In terms of assembly, homotetramer; composed of disulfide-linked homodimers. Interacts with F protein trimer. Interacts with host CG-1B; this interaction inhibits viral adsorption and replication rather than internalization.

It localises to the virion membrane. It is found in the host cell membrane. The catalysed reaction is Hydrolysis of alpha-(2-&gt;3)-, alpha-(2-&gt;6)-, alpha-(2-&gt;8)- glycosidic linkages of terminal sialic acid residues in oligosaccharides, glycoproteins, glycolipids, colominic acid and synthetic substrates.. Its function is as follows. Mediates the viral entry into the host cell together with fusion/F protein. Attaches the virus to sialic acid-containing cell receptors and thereby initiates infection. Binding of HN protein to the receptor induces a conformational change that allows the F protein to trigger virion/cell membranes fusion. Functionally, neuraminidase activity ensures the efficient spread of the virus by dissociating the mature virions from the neuraminic acid containing glycoproteins. In Gallus gallus (Chicken), this protein is Hemagglutinin-neuraminidase (HN).